Consider the following 272-residue polypeptide: Diaminopimelate epimerase (272 aa).

The substrate site is built by asparagine 11 and asparagine 60. Cysteine 69 functions as the Proton donor in the catalytic mechanism. Substrate contacts are provided by residues 70 to 71, asparagine 181, and 199 to 200; these read GN and ER. The active-site Proton acceptor is the cysteine 209. 210 to 211 serves as a coordination point for substrate; it reads GT.

This sequence belongs to the diaminopimelate epimerase family. Homodimer.

Its subcellular location is the cytoplasm. The enzyme catalyses (2S,6S)-2,6-diaminopimelate = meso-2,6-diaminopimelate. It functions in the pathway amino-acid biosynthesis; L-lysine biosynthesis via DAP pathway; DL-2,6-diaminopimelate from LL-2,6-diaminopimelate: step 1/1. Catalyzes the stereoinversion of LL-2,6-diaminopimelate (L,L-DAP) to meso-diaminopimelate (meso-DAP), a precursor of L-lysine and an essential component of the bacterial peptidoglycan. In Helicobacter pylori (strain P12), this protein is Diaminopimelate epimerase.